The sequence spans 285 residues: OPEP-3 protein (285 aa).

The sequence is that of OPEP-3 protein (OPEP-3) from Orgyia pseudotsugata multicapsid polyhedrosis virus (OpMNPV).